We begin with the raw amino-acid sequence, 173 residues long: ATP-dependent protease subunit HslV (173 aa).

Thr-2 is a catalytic residue. Na(+)-binding residues include Gly-158, Asp-161, and Ser-164.

It belongs to the peptidase T1B family. HslV subfamily. As to quaternary structure, a double ring-shaped homohexamer of HslV is capped on each side by a ring-shaped HslU homohexamer. The assembly of the HslU/HslV complex is dependent on binding of ATP.

The protein resides in the cytoplasm. It carries out the reaction ATP-dependent cleavage of peptide bonds with broad specificity.. Allosterically activated by HslU binding. Functionally, protease subunit of a proteasome-like degradation complex believed to be a general protein degrading machinery. The sequence is that of ATP-dependent protease subunit HslV from Mannheimia haemolytica (Pasteurella haemolytica).